We begin with the raw amino-acid sequence, 400 residues long: Mu-type opioid receptor (400 aa).

The Extracellular segment spans residues 1–68 (MDSSAVPANA…CPPTGSPSMI (68 aa)). N-linked (GlcNAc...) asparagine glycosylation is found at asparagine 9, asparagine 12, asparagine 33, asparagine 40, and asparagine 48. The helical transmembrane segment at 69–93 (TAITIMALYSIVCVVGLFGNFLVMY) threads the bilayer. At 94–106 (VIVRYTKMKTATN) the chain is on the cytoplasmic side. A helical membrane pass occupies residues 107–131 (IYIFNLALADALATSTLPFQSVNYL). Residues 132 to 142 (MGTWPFGTILC) lie on the Extracellular side of the membrane. An intrachain disulfide couples cysteine 142 to cysteine 219. Residues 143 to 165 (KIVISIDYYNMFTSIFTLCTMSV) form a helical membrane-spanning segment. Over 166–185 (DRYIAVCHPVKALDFRTPRN) the chain is Cytoplasmic. Tyrosine 168 carries the post-translational modification Phosphotyrosine. The chain crosses the membrane as a helical span at residues 186-207 (AKIVNVCNWIISSAIGLPVMFM). The Extracellular portion of the chain corresponds to 208–230 (ATTKYRQGSIDCTLTFSHPTWYW). The chain crosses the membrane as a helical span at residues 231-255 (ENLLKICVFIFAFIMPVLIITVCYG). Topologically, residues 256–279 (LMILRLKSVRMLSGSKEKDRNLRR) are cytoplasmic. Residues 280–306 (ITRMVLVVVAVFIVCWTPIHIYVIIKA) form a helical membrane-spanning segment. The Extracellular portion of the chain corresponds to 307–314 (LVTIPETT). Residues 315–338 (FQTVSWHFCIALGYTNSCLNPVLY) traverse the membrane as a helical segment. Residues 334 to 338 (NPVLY) carry the NPxxY; plays a role in stabilizing the activated conformation of the receptor motif. The Cytoplasmic portion of the chain corresponds to 339-400 (AFLDENFKRC…NLEAETAPLP (62 aa)). A lipid anchor (S-palmitoyl cysteine) is attached at cysteine 353. Position 365 is a phosphoserine (serine 365). A Phosphothreonine modification is found at threonine 372. At serine 377 the chain carries Phosphoserine. Threonine 396 carries the post-translational modification Phosphothreonine.

The protein belongs to the G-protein coupled receptor 1 family. As to quaternary structure, forms homooligomers and heterooligomers with other GPCRs, such as OPRD1, OPRK1, OPRL1, NPFFR2, ADRA2A, SSTR2, CNR1 and CCR5 (probably in dimeric forms). Interacts with heterotrimeric G proteins; interaction with a heterotrimeric complex containing GNAI1, GNB1 and GNG2 stabilizes the active conformation of the receptor and increases its affinity for endomorphin-2, the synthetic opioid peptide DAMGO and for morphinan agonists. Interacts with PPL; the interaction disrupts agonist-mediated G-protein activation. Interacts (via C-terminus) with DNAJB4 (via C-terminus). Interacts with calmodulin; the interaction inhibits the constitutive activity of OPRM1; it abolishes basal and attenuates agonist-stimulated G-protein coupling. Interacts with FLNA, PLD2, RANBP9 and WLS and GPM6A. Interacts with RTP4. Interacts with SYP and GNAS. Interacts with RGS9, RGS17, RGS20, RGS4, PPP1R9B and HINT1. Post-translationally, phosphorylated. Differentially phosphorylated in basal and agonist-induced conditions. Agonist-mediated phosphorylation modulates receptor internalization. Phosphorylated by GRK2 in a agonist-dependent manner. Phosphorylation at Tyr-168 requires receptor activation, is dependent on non-receptor protein tyrosine kinase Src and results in a decrease in agonist efficacy by reducing G-protein coupling efficiency. Phosphorylated on tyrosine residues; the phosphorylation is involved in agonist-induced G-protein-independent receptor down-regulation. Phosphorylation at Ser-377 is involved in G-protein-dependent but not beta-arrestin-dependent activation of the ERK pathway. Ubiquitinated. A basal ubiquitination seems not to be related to degradation. Ubiquitination is increased upon formation of OPRM1:OPRD1 oligomers leading to proteasomal degradation; the ubiquitination is diminished by RTP4.

It is found in the cell membrane. The protein resides in the cell projection. Its subcellular location is the axon. It localises to the perikaryon. The protein localises to the dendrite. It is found in the endosome. Its function is as follows. Receptor for endogenous opioids such as beta-endorphin and endomorphin. Receptor for natural and synthetic opioids including morphine, heroin, DAMGO, fentanyl, etorphine, buprenorphin and methadone. Also activated by enkephalin peptides, such as Met-enkephalin or Met-enkephalin-Arg-Phe, with higher affinity for Met-enkephalin-Arg-Phe. Agonist binding to the receptor induces coupling to an inactive GDP-bound heterotrimeric G-protein complex and subsequent exchange of GDP for GTP in the G-protein alpha subunit leading to dissociation of the G-protein complex with the free GTP-bound G-protein alpha and the G-protein beta-gamma dimer activating downstream cellular effectors. The agonist- and cell type-specific activity is predominantly coupled to pertussis toxin-sensitive G(i) and G(o) G alpha proteins, GNAI1, GNAI2, GNAI3 and GNAO1, and to a lesser extent to pertussis toxin-insensitive G alpha proteins GNAZ and GNA15. They mediate an array of downstream cellular responses, including inhibition of adenylate cyclase activity and both N-type and L-type calcium channels, activation of inward rectifying potassium channels, mitogen-activated protein kinase (MAPK), phospholipase C (PLC), phosphoinositide/protein kinase (PKC), phosphoinositide 3-kinase (PI3K) and regulation of NF-kappa-B. Also couples to adenylate cyclase stimulatory G alpha proteins. The selective temporal coupling to G-proteins and subsequent signaling can be regulated by RGSZ proteins, such as RGS9, RGS17 and RGS4. Phosphorylation by members of the GPRK subfamily of Ser/Thr protein kinases and association with beta-arrestins is involved in short-term receptor desensitization. Beta-arrestins associate with the GPRK-phosphorylated receptor and uncouple it from the G-protein thus terminating signal transduction. The phosphorylated receptor is internalized through endocytosis via clathrin-coated pits which involves beta-arrestins. The activation of the ERK pathway occurs either in a G-protein-dependent or a beta-arrestin-dependent manner and is regulated by agonist-specific receptor phosphorylation. Acts as a class A G-protein coupled receptor (GPCR) which dissociates from beta-arrestin at or near the plasma membrane and undergoes rapid recycling. Receptor down-regulation pathways are varying with the agonist and occur dependent or independent of G-protein coupling. Endogenous ligands induce rapid desensitization, endocytosis and recycling. Heterooligomerization with other GPCRs can modulate agonist binding, signaling and trafficking properties. Involved in neurogenesis. The sequence is that of Mu-type opioid receptor (OPRM1) from Saimiri boliviensis boliviensis (Bolivian squirrel monkey).